The following is a 643-amino-acid chain: MQKPLIELKGVSRVFNLGGLAVEVLKGIDLQIYPGEFVAIMGASGSGKSTLMNILGCLDRPSQGEYLFRGESVSLLHRDDLAQLRREEFGFIFQSYHLIHALDARENVEVPAIYAGAGIVEREKRAEELLGSLGLGERLHHRPSQLSGGQQQRVSIARALMNGGRVILADEPTGALDSRSGEEVMQLLMELSRQGHTIILITHDSHVASHANRVIEMKDGQITHRQEPVIRESNQVRSPFGVRHSSILLELFEAMKMAFRSLKMNLFRTVLTLLGIVIGVASVIVMLAIGDGAKNAVLERISAMGTNILVIRPGMPNSRGFSNIATLIPEDMEAIMELDNIIAAMPENKKSVTTRYGNNDQSTSLNATSSHFTKVRNWPLGKGVFFTEEDEKSYAKVVVLGKTVEKALFGEEDALGRFILVDNIMFQIIGVMSNRGASASGEDEDDVILVPYTTGSLHLIGQKFLRNITVAVDDLSRMGETEREIHSLLLARHGGIEDFRIRNMASLIEDVTQTQNTLTILLGSIAAISLLVGGIGVMNIMLVSVTERTKEIGIRIATGARMRHILQQFLIEAVVVSALGGLIGVVIGLGVSALIEGLGTPVYYSLMPIVWAFGCAFVTGLLFGYLPARKAARLDPVVALASE.

An ABC transporter domain is found at 6 to 244 (IELKGVSRVF…QVRSPFGVRH (239 aa)). ATP is bound at residue 42–49 (GASGSGKS). 4 consecutive transmembrane segments (helical) span residues 270–290 (VLTL…LAIG), 518–538 (LTIL…IGVM), 569–589 (FLIE…VIGL), and 606–626 (LMPI…FGYL).

This sequence belongs to the ABC transporter superfamily. Macrolide exporter (TC 3.A.1.122) family. Homodimer.

The protein localises to the cell inner membrane. Non-canonical ABC transporter that contains transmembrane domains (TMD), which form a pore in the inner membrane, and an ATP-binding domain (NBD), which is responsible for energy generation. Confers resistance against macrolides. The sequence is that of Macrolide export ATP-binding/permease protein MacB from Wolinella succinogenes (strain ATCC 29543 / DSM 1740 / CCUG 13145 / JCM 31913 / LMG 7466 / NCTC 11488 / FDC 602W) (Vibrio succinogenes).